The following is a 317-amino-acid chain: uncharacterized protein (317 aa).

Residues 1 to 11 (MASAGAERRPG) show a composition bias toward basic and acidic residues. The segment at 1 to 164 (MASAGAERRP…KAKKRKSLGA (164 aa)) is disordered. Residues 19 to 34 (GQGQLTEEPGSAQTSE) are compositionally biased toward polar residues. 2 stretches are compositionally biased toward basic and acidic residues: residues 47 to 58 (HEARGTQSEDQR) and 71 to 92 (EGPK…ERGP). 2 stretches are compositionally biased toward basic residues: residues 100-110 (RPRHGPKRKPV) and 151-161 (KQHKKAKKRKS).

This is an uncharacterized protein from Homo sapiens (Human).